A 388-amino-acid chain; its full sequence is Chorismate synthase (388 aa).

NADP(+)-binding residues include Arg39 and Arg45. Residues 130–132 (RSS), 251–252 (NA), Gly296, 311–315 (KPIPT), and Arg337 each bind FMN.

It belongs to the chorismate synthase family. As to quaternary structure, homotetramer. FMNH2 is required as a cofactor.

The catalysed reaction is 5-O-(1-carboxyvinyl)-3-phosphoshikimate = chorismate + phosphate. It functions in the pathway metabolic intermediate biosynthesis; chorismate biosynthesis; chorismate from D-erythrose 4-phosphate and phosphoenolpyruvate: step 7/7. In terms of biological role, catalyzes the anti-1,4-elimination of the C-3 phosphate and the C-6 proR hydrogen from 5-enolpyruvylshikimate-3-phosphate (EPSP) to yield chorismate, which is the branch point compound that serves as the starting substrate for the three terminal pathways of aromatic amino acid biosynthesis. This reaction introduces a second double bond into the aromatic ring system. In Streptococcus pyogenes serotype M5 (strain Manfredo), this protein is Chorismate synthase.